The primary structure comprises 359 residues: Phospho-N-acetylmuramoyl-pentapeptide-transferase (359 aa).

10 consecutive transmembrane segments (helical) span residues 3–23, 55–75, 80–100, 117–137, 156–176, 187–207, 231–251, 255–275, 280–300, and 334–354; these read QILV…PALI, VAIV…GLAF, VSAS…VGFL, TAKT…VLQF, IATV…IVSA, LDGL…LITF, LTLI…WNAA, IFMG…LSVT, ILAV…VLQI, and FWLL…GEWL.

The protein belongs to the glycosyltransferase 4 family. MraY subfamily. Mg(2+) serves as cofactor.

The protein localises to the cell membrane. It catalyses the reaction UDP-N-acetyl-alpha-D-muramoyl-L-alanyl-gamma-D-glutamyl-meso-2,6-diaminopimeloyl-D-alanyl-D-alanine + di-trans,octa-cis-undecaprenyl phosphate = di-trans,octa-cis-undecaprenyl diphospho-N-acetyl-alpha-D-muramoyl-L-alanyl-D-glutamyl-meso-2,6-diaminopimeloyl-D-alanyl-D-alanine + UMP. It participates in cell wall biogenesis; peptidoglycan biosynthesis. Its function is as follows. Catalyzes the initial step of the lipid cycle reactions in the biosynthesis of the cell wall peptidoglycan: transfers peptidoglycan precursor phospho-MurNAc-pentapeptide from UDP-MurNAc-pentapeptide onto the lipid carrier undecaprenyl phosphate, yielding undecaprenyl-pyrophosphoryl-MurNAc-pentapeptide, known as lipid I. In Mycobacterium leprae (strain TN), this protein is Phospho-N-acetylmuramoyl-pentapeptide-transferase.